The chain runs to 214 residues: Probable transaldolase (214 aa).

Lys-83 serves as the catalytic Schiff-base intermediate with substrate.

The protein belongs to the transaldolase family. Type 3B subfamily.

It localises to the cytoplasm. It carries out the reaction D-sedoheptulose 7-phosphate + D-glyceraldehyde 3-phosphate = D-erythrose 4-phosphate + beta-D-fructose 6-phosphate. Its pathway is carbohydrate degradation; pentose phosphate pathway; D-glyceraldehyde 3-phosphate and beta-D-fructose 6-phosphate from D-ribose 5-phosphate and D-xylulose 5-phosphate (non-oxidative stage): step 2/3. Transaldolase is important for the balance of metabolites in the pentose-phosphate pathway. This is Probable transaldolase from Desulfotalea psychrophila (strain LSv54 / DSM 12343).